The primary structure comprises 46 residues: Esculentin-1a/b (46 aa).

A disulfide bridge connects residues cysteine 40 and cysteine 46.

The protein belongs to the frog skin active peptide (FSAP) family. Esculentin subfamily. Expressed by the skin glands.

It is found in the secreted. Antimicrobial peptide. Stimulates insulin secretion by BRIN-BD11 cells in vitro. Shows hemolytic activity. This Pelophylax ridibundus (Marsh frog) protein is Esculentin-1a/b.